Here is a 189-residue protein sequence, read N- to C-terminus: ATP synthase subunit delta (189 aa).

Belongs to the ATPase delta chain family. As to quaternary structure, F-type ATPases have 2 components, F(1) - the catalytic core - and F(0) - the membrane proton channel. F(1) has five subunits: alpha(3), beta(3), gamma(1), delta(1), epsilon(1). F(0) has three main subunits: a(1), b(2) and c(10-14). The alpha and beta chains form an alternating ring which encloses part of the gamma chain. F(1) is attached to F(0) by a central stalk formed by the gamma and epsilon chains, while a peripheral stalk is formed by the delta and b chains.

It localises to the cell inner membrane. In terms of biological role, f(1)F(0) ATP synthase produces ATP from ADP in the presence of a proton or sodium gradient. F-type ATPases consist of two structural domains, F(1) containing the extramembraneous catalytic core and F(0) containing the membrane proton channel, linked together by a central stalk and a peripheral stalk. During catalysis, ATP synthesis in the catalytic domain of F(1) is coupled via a rotary mechanism of the central stalk subunits to proton translocation. Its function is as follows. This protein is part of the stalk that links CF(0) to CF(1). It either transmits conformational changes from CF(0) to CF(1) or is implicated in proton conduction. The polypeptide is ATP synthase subunit delta (Methylorubrum extorquens (strain PA1) (Methylobacterium extorquens)).